Here is a 269-residue protein sequence, read N- to C-terminus: Small ribosomal subunit protein eS1 (269 aa).

The segment at 1–20 (MAVGKNKGVSKGGKKGSKKK) is disordered.

It belongs to the eukaryotic ribosomal protein eS1 family. In terms of assembly, component of the small ribosomal subunit. Mature ribosomes consist of a small (40S) and a large (60S) subunit. The 40S subunit contains about 33 different proteins and 1 molecule of RNA (18S). The 60S subunit contains about 49 different proteins and 3 molecules of RNA (28S, 5.8S and 5S).

The protein resides in the cytoplasm. Functionally, has an essential role in oogenesis. This chain is Small ribosomal subunit protein eS1, found in Anopheles gambiae (African malaria mosquito).